The sequence spans 273 residues: Type III pantothenate kinase (273 aa).

An ATP-binding site is contributed by 7–14 (DVGNTAIK). Substrate contacts are provided by residues Phe119 and 124 to 127 (GIDR). Asp126 acts as the Proton acceptor in catalysis. Asp146 contributes to the K(+) binding site. ATP is bound at residue Thr149. Thr206 is a binding site for substrate.

This sequence belongs to the type III pantothenate kinase family. Homodimer. NH4(+) serves as cofactor. It depends on K(+) as a cofactor.

It localises to the cytoplasm. It catalyses the reaction (R)-pantothenate + ATP = (R)-4'-phosphopantothenate + ADP + H(+). It functions in the pathway cofactor biosynthesis; coenzyme A biosynthesis; CoA from (R)-pantothenate: step 1/5. Functionally, catalyzes the phosphorylation of pantothenate (Pan), the first step in CoA biosynthesis. The chain is Type III pantothenate kinase from Rhodopirellula baltica (strain DSM 10527 / NCIMB 13988 / SH1).